A 541-amino-acid chain; its full sequence is Arginine--tRNA ligase (541 aa).

Residues 119-129 (ANPTGPLHIGH) carry the 'HIGH' region motif.

The protein belongs to the class-I aminoacyl-tRNA synthetase family. In terms of assembly, monomer.

The protein resides in the cytoplasm. The catalysed reaction is tRNA(Arg) + L-arginine + ATP = L-arginyl-tRNA(Arg) + AMP + diphosphate. The protein is Arginine--tRNA ligase (argS) of Helicobacter pylori (strain ATCC 700392 / 26695) (Campylobacter pylori).